An 868-amino-acid polypeptide reads, in one-letter code: Protein translocase subunit SecA (868 aa).

ATP-binding positions include Q85, 103–107, and D508; that span reads GEGKT.

This sequence belongs to the SecA family. Monomer and homodimer. Part of the essential Sec protein translocation apparatus which comprises SecA, SecYEG and auxiliary proteins SecDF. Other proteins may also be involved.

It localises to the cell membrane. Its subcellular location is the cytoplasm. It carries out the reaction ATP + H2O + cellular proteinSide 1 = ADP + phosphate + cellular proteinSide 2.. In terms of biological role, part of the Sec protein translocase complex. Interacts with the SecYEG preprotein conducting channel. Has a central role in coupling the hydrolysis of ATP to the transfer of proteins into and across the cell membrane, serving as an ATP-driven molecular motor driving the stepwise translocation of polypeptide chains across the membrane. This is Protein translocase subunit SecA from Deinococcus radiodurans (strain ATCC 13939 / DSM 20539 / JCM 16871 / CCUG 27074 / LMG 4051 / NBRC 15346 / NCIMB 9279 / VKM B-1422 / R1).